The following is a 118-amino-acid chain: MSPSESFNSFSLFSTLSMFKFLTQITFSRPFVYSALNKGCPDFLITSNCIHGNSWPHLSNLFEVKNFLMPSEDPPQLQNCKVIFLHGNTNAPTPLRPMEFRAIAFTTISPYIRVCVST.

It is found in the mitochondrion. In terms of biological role, essential for the functional mitochondria and respiratory growth. This Saccharomyces cerevisiae (strain ATCC 204508 / S288c) (Baker's yeast) protein is Mitochondrial protein YPR099C.